Reading from the N-terminus, the 581-residue chain is Arginine--tRNA ligase (581 aa).

The 'HIGH' region signature appears at 126–136 (PNLAKEMHVGH).

Belongs to the class-I aminoacyl-tRNA synthetase family. Monomer.

The protein localises to the cytoplasm. The enzyme catalyses tRNA(Arg) + L-arginine + ATP = L-arginyl-tRNA(Arg) + AMP + diphosphate. The protein is Arginine--tRNA ligase of Shewanella sp. (strain MR-7).